The following is a 349-amino-acid chain: [LysW]-L-2-aminoadipate/[LysW]-L-glutamate phosphate reductase (349 aa).

Residue 10-13 (SGYT) coordinates NADP(+). Cys-150 is a catalytic residue. Residue Asn-316 participates in NADP(+) binding.

The protein belongs to the NAGSA dehydrogenase family. Type 1 subfamily. LysY sub-subfamily.

The protein resides in the cytoplasm. The catalysed reaction is [amino-group carrier protein]-C-terminal-N-(1-carboxy-5-oxopentan-1-yl)-L-glutamine + phosphate + NADP(+) = [amino-group carrier protein]-C-terminal-N-(1-carboxy-5-phosphooxy-5-oxopentan-1-yl)-L-glutamine + NADPH + H(+). It carries out the reaction [amino-group carrier protein]-C-terminal-gamma-(L-glutamyl-5-semialdehyde)-L-glutamate + phosphate + NADP(+) = [amino-group carrier protein]-C-terminal-gamma-(5-phospho-L-glutamyl)-L-glutamate + NADPH + H(+). Its pathway is amino-acid biosynthesis; L-lysine biosynthesis via AAA pathway; L-lysine from L-alpha-aminoadipate (Thermus route): step 3/5. It functions in the pathway amino-acid biosynthesis; L-arginine biosynthesis. Functionally, involved in both the arginine and lysine biosynthetic pathways. The chain is [LysW]-L-2-aminoadipate/[LysW]-L-glutamate phosphate reductase from Sulfurisphaera tokodaii (strain DSM 16993 / JCM 10545 / NBRC 100140 / 7) (Sulfolobus tokodaii).